The primary structure comprises 216 residues: Outer-membrane lipoprotein LolB (216 aa).

A signal peptide spans 1–21 (MLIFKICFYRLLPLSVLLLAA). Residue Cys-22 is the site of N-palmitoyl cysteine attachment. The S-diacylglycerol cysteine moiety is linked to residue Cys-22.

The protein belongs to the LolB family. As to quaternary structure, monomer.

Its subcellular location is the cell outer membrane. Plays a critical role in the incorporation of lipoproteins in the outer membrane after they are released by the LolA protein. The chain is Outer-membrane lipoprotein LolB from Hamiltonella defensa subsp. Acyrthosiphon pisum (strain 5AT).